We begin with the raw amino-acid sequence, 332 residues long: MAHQLRFAAAREPISEEYPAVALPHPRCISVAFPPPRFTPSPSPLTNYSFLAALTPQELEMRLQIAMDVQMISKLDQRKLQTMASLLTSDPDYFLMIARNMNGSKRIQKLLGKTDDVDALFAAAILRRFLHIITDKYASYVVRRGMTVFDKKKKKAMYEHILHYASHIARDKHGNLALNDIITDAYRNKLFDVIAHKALVLSNDAYGNFVIQRVLKLNDLRSKNNIVVSLRGHFVDLSFQKYGSYVVDVLLETKESMVVVVEELMECEGDMLMRLARNEYGNFLVCKALRVTQKEMVRTDLFWGLVHKLKPFHNLLRWSRGKNIASILNSIR.

In terms of domain architecture, PUM-HD spans 1-332 (MAHQLRFAAA…NIASILNSIR (332 aa)). 2 Pumilio repeats span residues 89 to 124 (SDPD…FAAA) and 125 to 159 (ILRR…AMYE). One copy of the Pumilio 3; degenerate repeat lies at 160 to 191 (HILHYASHIARDKHGNLALNDIITDAYRNKLF). Pumilio repeat units follow at residues 192–228 (DVIA…NIVV), 229–266 (SLRG…ELME), and 267–303 (CEGD…DLFW).

It is found in the cytoplasm. Sequence-specific RNA-binding protein that regulates translation and mRNA stability by binding the 3'-UTR of target mRNAs. In Arabidopsis thaliana (Mouse-ear cress), this protein is Putative pumilio homolog 20 (APUM20).